The following is a 331-amino-acid chain: C4-dicarboxylate-binding periplasmic protein DctP (331 aa).

An N-terminal signal peptide occupies residues 1–23 (MLKHTAKALVCALSLTVAGIVQA).

This sequence belongs to the bacterial solute-binding protein 7 family. The complex comprises the extracytoplasmic solute receptor protein DctP, and the two transmembrane proteins DctQ and DctM.

It localises to the periplasm. Part of the tripartite ATP-independent periplasmic (TRAP) transport system DctPQM involved in C4-dicarboxylates uptake. This is C4-dicarboxylate-binding periplasmic protein DctP from Pseudomonas aeruginosa (strain ATCC 15692 / DSM 22644 / CIP 104116 / JCM 14847 / LMG 12228 / 1C / PRS 101 / PAO1).